We begin with the raw amino-acid sequence, 160 residues long: Transcription elongation factor GreA (160 aa).

Residues 1-72 (MAEKTYPMTL…QISSLETKIR (72 aa)) adopt a coiled-coil conformation.

This sequence belongs to the GreA/GreB family.

Functionally, necessary for efficient RNA polymerase transcription elongation past template-encoded arresting sites. The arresting sites in DNA have the property of trapping a certain fraction of elongating RNA polymerases that pass through, resulting in locked ternary complexes. Cleavage of the nascent transcript by cleavage factors such as GreA or GreB allows the resumption of elongation from the new 3'terminus. GreA releases sequences of 2 to 3 nucleotides. This chain is Transcription elongation factor GreA, found in Streptococcus pneumoniae (strain Hungary19A-6).